Reading from the N-terminus, the 118-residue chain is Basic phospholipase A2 PA-9C (118 aa).

Intrachain disulfides connect Cys-11–Cys-71, Cys-27–Cys-117, Cys-29–Cys-45, Cys-44–Cys-98, Cys-51–Cys-91, Cys-60–Cys-84, and Cys-78–Cys-89. Tyr-28, Gly-30, and Gly-32 together coordinate Ca(2+). His-48 is an active-site residue. Asp-49 contributes to the Ca(2+) binding site. The active site involves Asp-92.

The protein belongs to the phospholipase A2 family. Group I subfamily. D49 sub-subfamily. Requires Ca(2+) as cofactor. In terms of tissue distribution, expressed by the venom gland.

The protein localises to the secreted. The catalysed reaction is a 1,2-diacyl-sn-glycero-3-phosphocholine + H2O = a 1-acyl-sn-glycero-3-phosphocholine + a fatty acid + H(+). PLA2 catalyzes the calcium-dependent hydrolysis of the 2-acyl groups in 3-sn-phosphoglycerides. This is Basic phospholipase A2 PA-9C from Pseudechis australis (Mulga snake).